Here is a 467-residue protein sequence, read N- to C-terminus: Ribosomal protein uS12 methylthiotransferase RimO (467 aa).

A disordered region spans residues 1 to 27 (MTSNPPDLRPDLAPKPTFGTAPRPDQP). The MTTase N-terminal domain maps to 27-137 (PTLGMVSLGC…VLDAVHAAVP (111 aa)). Residues Cys-36, Cys-72, Cys-101, Cys-168, Cys-172, and Cys-175 each coordinate [4Fe-4S] cluster. The 244-residue stretch at 154–397 (LTPRHFSYLK…MEKAQAISEA (244 aa)) folds into the Radical SAM core domain. The 68-residue stretch at 400–467 (ASKVGQTLQV…GEYDLWGALR (68 aa)) folds into the TRAM domain.

The protein belongs to the methylthiotransferase family. RimO subfamily. [4Fe-4S] cluster serves as cofactor.

Its subcellular location is the cytoplasm. It catalyses the reaction L-aspartate(89)-[ribosomal protein uS12]-hydrogen + (sulfur carrier)-SH + AH2 + 2 S-adenosyl-L-methionine = 3-methylsulfanyl-L-aspartate(89)-[ribosomal protein uS12]-hydrogen + (sulfur carrier)-H + 5'-deoxyadenosine + L-methionine + A + S-adenosyl-L-homocysteine + 2 H(+). Its function is as follows. Catalyzes the methylthiolation of an aspartic acid residue of ribosomal protein uS12. This chain is Ribosomal protein uS12 methylthiotransferase RimO, found in Ruegeria sp. (strain TM1040) (Silicibacter sp.).